Reading from the N-terminus, the 173-residue chain is Crossover junction endodeoxyribonuclease RuvC (173 aa).

Residues aspartate 8, glutamate 67, and aspartate 139 contribute to the active site. Positions 8, 67, and 139 each coordinate Mg(2+).

This sequence belongs to the RuvC family. In terms of assembly, homodimer which binds Holliday junction (HJ) DNA. The HJ becomes 2-fold symmetrical on binding to RuvC with unstacked arms; it has a different conformation from HJ DNA in complex with RuvA. In the full resolvosome a probable DNA-RuvA(4)-RuvB(12)-RuvC(2) complex forms which resolves the HJ. Requires Mg(2+) as cofactor.

The protein resides in the cytoplasm. It carries out the reaction Endonucleolytic cleavage at a junction such as a reciprocal single-stranded crossover between two homologous DNA duplexes (Holliday junction).. Functionally, the RuvA-RuvB-RuvC complex processes Holliday junction (HJ) DNA during genetic recombination and DNA repair. Endonuclease that resolves HJ intermediates. Cleaves cruciform DNA by making single-stranded nicks across the HJ at symmetrical positions within the homologous arms, yielding a 5'-phosphate and a 3'-hydroxyl group; requires a central core of homology in the junction. The consensus cleavage sequence is 5'-(A/T)TT(C/G)-3'. Cleavage occurs on the 3'-side of the TT dinucleotide at the point of strand exchange. HJ branch migration catalyzed by RuvA-RuvB allows RuvC to scan DNA until it finds its consensus sequence, where it cleaves and resolves the cruciform DNA. The polypeptide is Crossover junction endodeoxyribonuclease RuvC (Salmonella paratyphi C (strain RKS4594)).